The chain runs to 516 residues: MLRIPGKSLGYHEDISLTPWQAILASVIVLLGLKVATILYTAFYNVFLHPLRRFPGPVTWIAAPWMKSISHIRGQQDHQIVKLHQKLGHIIRVGPDTLSFTEMSAWRDIYGTGHAELPKHIYKGSGMEERPNIITAHSRDHHRFRKAMTPALTPEAITHEEALIKGYVDMLIEHLHKFAKSSDPYVNVSQWYTMTTFDIFGDLCYGESFNSLATGKQHLWLKSMSSMKVLVPLLVFPYISWLLVWWLLSPEQQRSLSDHQKRSYELTMKRIANRDTHPRHDFMTFMLRNRGEDQGVTDHELASNSDIVISAGSETTSTALTGITFFLCSNPDAMARCAKEVREAFKSDDEITFKATAELPFMLACIEETLRMYPPVPTSLIRRTLPGRPTLIAGELIPENTIVGVHHLATYRSERNFFDAKAFRPERWLAETRNDPKSPFKDDRLDAVRPFSYGPRNCIGRNLAYHEMRLILAKLLWHFDLKLKPGYEDWGFKQRTFQLWEKPKLVVEFKERQFQV.

Residues Ile-23–Phe-43 traverse the membrane as a helical segment. An N-linked (GlcNAc...) asparagine glycan is attached at Asn-187. A helical transmembrane segment spans residues Val-229 to Ser-249. Cys-458 contributes to the heme binding site.

It belongs to the cytochrome P450 family. The cofactor is heme.

The protein resides in the membrane. It participates in secondary metabolite biosynthesis. In terms of biological role, cytochrome P450 monooxygenase; part of the gene cluster that mediates the biosynthesis of destruxins, insecticidal cyclic hexadepsipeptides which induce flaccid paralysis and visceral muscle contraction in insects through targeting the calcium channels and vacuolar-type ATPases. The aldo-keto reductase dtxS3 converts alpha-ketoisocaproic acid from deaminated leucine into alpha-hydroxyisocaproic acid (HIC), which is the first substrate for destruxin assembly by dtxS1. L-aspartate decarboxylase dtxS4 converts aspartic acid into beta-alanine, the last substrate for the destruxin assembly line performed by dtxS1. The nonribosomal peptide synthetase dtxS1 synthesizes destruxins B and B2, whereas the cytochrome P450 monooxygenase dtxS2 is required to convert destruxin B into other destruxin derivatives, including destructins C, D, A and E. Destruxin E-diol (ED) is further produced in a non-enzymatic manner from destruxin E. Destruxins play an important role in virulence and escape from insect host immune defenses. In Metarhizium robertsii (strain ARSEF 23 / ATCC MYA-3075) (Metarhizium anisopliae (strain ARSEF 23)), this protein is Cytochrome P450 monooxygenase dtxS2.